We begin with the raw amino-acid sequence, 351 residues long: Protein Maqu_2141 (351 aa).

This sequence belongs to the proline racemase family.

Displays neither proline racemase activity nor trans-4-hydroxy-L-proline (t4LHyp) epimerase activity nor t3LHyp dehydratase activity. This is Protein Maqu_2141 from Marinobacter nauticus (strain ATCC 700491 / DSM 11845 / VT8) (Marinobacter aquaeolei).